A 197-amino-acid polypeptide reads, in one-letter code: Recombination protein RecR (197 aa).

A C4-type zinc finger spans residues 57 to 72; the sequence is CSRCGYLTDFDPCLIC. The 95-residue stretch at 80–174 folds into the Toprim domain; the sequence is SLICIGEESS…KVTRLAHGLP (95 aa).

The protein belongs to the RecR family.

Functionally, may play a role in DNA repair. It seems to be involved in an RecBC-independent recombinational process of DNA repair. It may act with RecF and RecO. This is Recombination protein RecR from Syntrophomonas wolfei subsp. wolfei (strain DSM 2245B / Goettingen).